The sequence spans 81 residues: Large ribosomal subunit protein bL28 (81 aa).

The protein belongs to the bacterial ribosomal protein bL28 family. Part of the 50S ribosomal subunit.

The sequence is that of Large ribosomal subunit protein bL28 from Deinococcus radiodurans (strain ATCC 13939 / DSM 20539 / JCM 16871 / CCUG 27074 / LMG 4051 / NBRC 15346 / NCIMB 9279 / VKM B-1422 / R1).